Here is a 416-residue protein sequence, read N- to C-terminus: MKSPISLLAAVGVASAASPQTLLSLASTASDIIDASPFLSFHRDIVQIPSISGNETAVGTFVAEFLESHNFTVIKQPVPSSSNGDPNRFNIFAYPSTSPSQGRPDILLTSHIDTVPPFIPYGLHDDANNNSNILISGRGTVDAKASVAAQIFAVLDTLESNPTASLGLLFVVDEEVGGLGMRTFSDNSTLNPSPSPYHTVIFGEPTEQALVAGHKGMLEFPIIATGQAAHSGYPWLGSSAISALLPALSRVDRLGKIPEAEGGLPASEKYGETTVNIGRVDAGVAANVVPSSAIAEVAIRLAAGTPDEAREIVARAVRNATGGDEHVYCDFAAYAGGYAPQDLDTDVPGFEVTTVNYGTDVPNLKVSEGVKRYLYGPGSIHVAHGDNEAITVGQLEEAVRGYKQLIEAAVQRARRT.

Positions 1-16 are cleaved as a signal peptide; that stretch reads MKSPISLLAAVGVASA. N-linked (GlcNAc...) asparagine glycans are attached at residues Asn54, Asn70, and Asn129. Asp142 contributes to the Zn(2+) binding site. Glu174 acts as the Proton acceptor in catalysis. Residue Glu175 coordinates Zn(2+). Residues Asn187 and Asn319 are each glycosylated (N-linked (GlcNAc...) asparagine).

It belongs to the peptidase M20A family. Requires Zn(2+) as cofactor.

Its subcellular location is the secreted. In Aspergillus niger (strain ATCC MYA-4892 / CBS 513.88 / FGSC A1513), this protein is Probable carboxypeptidase An18g06210.